The following is a 244-amino-acid chain: MIIMYAIGIGDNKEEVLKAYEKLKEEGIEVELIDNPKLLVDKLLDGEIDGAVRGSLSSSKVILYLRERIGKFYRASILKNPFTNGIFLLSPVGIDDISEDKNERIKDKIRIIEFASNFLKNYNIKAKVAVLSGGRLGDLGRNKVVDETIYEAEEIVEHFKGNVDIIHNGILIEEYLKDGYNIIIAVDGITGNLIFRCLGLICKIPGYGAVILSDKNVNFIDTSRNANWERYYNAIKFLIGGDFG.

This sequence belongs to the MtxX family.

This is an uncharacterized protein from Methanocaldococcus jannaschii (strain ATCC 43067 / DSM 2661 / JAL-1 / JCM 10045 / NBRC 100440) (Methanococcus jannaschii).